The chain runs to 216 residues: Vascular endothelial growth factor A (216 aa).

The signal sequence occupies residues methionine 1–alanine 26. Cystine bridges form between cysteine 52/cysteine 94, cysteine 83/cysteine 128, and cysteine 87/cysteine 130. N-linked (GlcNAc...) asparagine glycosylation occurs at asparagine 101. The interval glutamine 140–tyrosine 161 is disordered. Basic residues predominate over residues lysine 145–tyrosine 161.

This sequence belongs to the PDGF/VEGF growth factor family. Homodimer; disulfide-linked. Also found as heterodimer with PGF. Interacts to the FLT1/VEGFR1 and KDR/VEGFR2 receptors, heparan sulfate and heparin. As to expression, expressed in venom gland, heart, brain, liver, skeletal muscle and kidney.

The protein localises to the secreted. Functionally, growth factor active in angiogenesis, vasculogenesis and endothelial cell growth. Induces endothelial cell proliferation, promotes cell migration, inhibits apoptosis and induces permeabilization of blood vessels. This chain is Vascular endothelial growth factor A, found in Protobothrops flavoviridis (Habu).